A 588-amino-acid chain; its full sequence is UDP-N-acetylmuramate--L-alanine ligase (588 aa).

119–125 lines the ATP pocket; sequence GSHGKST. Over residues 344-371 the composition is skewed to low complexity; the sequence is VPAAAGAAAAPPVRRDPATAAAAATTAP. The tract at residues 344–411 is disordered; it reads VPAAAGAAAA…APAAGPDHAA (68 aa). The span at 372-381 shows a compositional bias: pro residues; sequence IGPPDSPPPT. Over residues 382–411 the composition is skewed to low complexity; the sequence is GIALPRAAPPAVDAPVAATPAPAAGPDHAA.

It belongs to the MurCDEF family.

It localises to the cytoplasm. It catalyses the reaction UDP-N-acetyl-alpha-D-muramate + L-alanine + ATP = UDP-N-acetyl-alpha-D-muramoyl-L-alanine + ADP + phosphate + H(+). Its pathway is cell wall biogenesis; peptidoglycan biosynthesis. Functionally, cell wall formation. The protein is UDP-N-acetylmuramate--L-alanine ligase of Frankia alni (strain DSM 45986 / CECT 9034 / ACN14a).